The chain runs to 240 residues: Orotidine 5'-phosphate decarboxylase (240 aa).

Substrate contacts are provided by residues Asp10, Lys33, 60-69 (DLKLHDIPNT), Thr123, Arg185, Gln194, Gly214, and Arg215. Lys62 functions as the Proton donor in the catalytic mechanism.

This sequence belongs to the OMP decarboxylase family. Type 1 subfamily. Homodimer.

The enzyme catalyses orotidine 5'-phosphate + H(+) = UMP + CO2. The protein operates within pyrimidine metabolism; UMP biosynthesis via de novo pathway; UMP from orotate: step 2/2. In terms of biological role, catalyzes the decarboxylation of orotidine 5'-monophosphate (OMP) to uridine 5'-monophosphate (UMP). This chain is Orotidine 5'-phosphate decarboxylase, found in Lactobacillus delbrueckii subsp. bulgaricus (strain ATCC 11842 / DSM 20081 / BCRC 10696 / JCM 1002 / NBRC 13953 / NCIMB 11778 / NCTC 12712 / WDCM 00102 / Lb 14).